Consider the following 323-residue polypeptide: Methionyl-tRNA formyltransferase (323 aa).

115–118 provides a ligand contact to (6S)-5,6,7,8-tetrahydrofolate; that stretch reads SLLP.

Belongs to the Fmt family.

The enzyme catalyses L-methionyl-tRNA(fMet) + (6R)-10-formyltetrahydrofolate = N-formyl-L-methionyl-tRNA(fMet) + (6S)-5,6,7,8-tetrahydrofolate + H(+). In terms of biological role, attaches a formyl group to the free amino group of methionyl-tRNA(fMet). The formyl group appears to play a dual role in the initiator identity of N-formylmethionyl-tRNA by promoting its recognition by IF2 and preventing the misappropriation of this tRNA by the elongation apparatus. This is Methionyl-tRNA formyltransferase from Blochmanniella floridana.